A 221-amino-acid chain; its full sequence is Riboflavin kinase (221 aa).

An H-T-H motif-like region spans residues 1–89; it reads MENIYIALKT…ISSILRFSQE (89 aa). The segment at 90–221 is riboflavin kinase; sequence LKLVGAVQDG…EVLASIDGKL (132 aa). 99–104 contacts CDP; sequence GLGEGK. Positions 128 and 130 each coordinate Mg(2+). Residues Ser-185 and Glu-192 each contribute to the FMN site. Position 197–200 (197–200) interacts with CDP; the sequence is KYLR.

It belongs to the archaeal riboflavin kinase family. Mg(2+) is required as a cofactor.

It carries out the reaction riboflavin + CTP = CDP + FMN + H(+). It participates in cofactor biosynthesis; FMN biosynthesis; FMN from riboflavin (CTP route): step 1/1. In terms of biological role, catalyzes the CTP-dependent phosphorylation of riboflavin (vitamin B2) to form flavin mononucleotide (FMN). This Picrophilus torridus (strain ATCC 700027 / DSM 9790 / JCM 10055 / NBRC 100828 / KAW 2/3) protein is Riboflavin kinase (ribK).